A 444-amino-acid chain; its full sequence is Trigger factor (444 aa).

The 86-residue stretch at 185–270 (GDKLIIDFEG…VNEIQIAKDF (86 aa)) folds into the PPIase FKBP-type domain.

It belongs to the FKBP-type PPIase family. Tig subfamily.

The protein resides in the cytoplasm. The catalysed reaction is [protein]-peptidylproline (omega=180) = [protein]-peptidylproline (omega=0). Its function is as follows. Involved in protein export. Acts as a chaperone by maintaining the newly synthesized protein in an open conformation. Functions as a peptidyl-prolyl cis-trans isomerase. The polypeptide is Trigger factor (Wolbachia pipientis wMel).